Here is a 407-residue protein sequence, read N- to C-terminus: uncharacterized protein (407 aa).

This is an uncharacterized protein from Mycobacterium bovis (strain ATCC BAA-935 / AF2122/97).